Here is a 412-residue protein sequence, read N- to C-terminus: Putative competence-damage inducible protein (412 aa).

This sequence belongs to the CinA family.

The chain is Putative competence-damage inducible protein from Bacillus thuringiensis (strain Al Hakam).